Consider the following 349-residue polypeptide: MNLTNIPRQALPELLCRMPKAELHIHIEGSLEPELIFALAERNRLQLAYPTIESLRAAYAFTNLQSFLDIYYAGASVLQTEQDFFDMAWAYLLRAKADNVVHAEIFFDPQTHTARGIPFATIINGLDRAIQQGRNELGISAALILCFLRHLTEADAFTVLEEALPFRDKFIGVGLDSGEKGNPPEKFSRVFARCRELGLRLVAHAGEEGTAEYIWHALDLLQAERIDHGVHCLDDPQLVTRLVQQQVPLTVCPLSNVKLRVFPDLAAHNIARLLACGIRATINSDDPAYFGGYLNQNYLETFAALPELGAAEAYQLARNSFEASFVDAEVKAGWIRELDQFFQQQCDKI.

Residues His-24, His-26, and His-204 each contribute to the Zn(2+) site. Catalysis depends on Glu-207, which acts as the Proton donor. Asp-285 is a binding site for Zn(2+). Residue Asp-286 coordinates substrate.

Belongs to the metallo-dependent hydrolases superfamily. Adenosine and AMP deaminases family. Adenine deaminase type 2 subfamily. Requires Zn(2+) as cofactor.

The catalysed reaction is adenine + H2O + H(+) = hypoxanthine + NH4(+). Catalyzes the hydrolytic deamination of adenine to hypoxanthine. Plays an important role in the purine salvage pathway and in nitrogen catabolism. The protein is Adenine deaminase of Trichlorobacter lovleyi (strain ATCC BAA-1151 / DSM 17278 / SZ) (Geobacter lovleyi).